An 821-amino-acid chain; its full sequence is Cation/H(+) antiporter 15 (821 aa).

Helical transmembrane passes span Leu-37 to Ile-57, Arg-65 to Gly-82, Val-97 to Val-117, Ala-131 to Phe-151, Ile-166 to Ala-186, Met-200 to Leu-220, Phe-228 to Val-248, Phe-268 to Gly-288, Val-292 to Ile-312, Phe-318 to Ala-338, Phe-350 to Phe-370, Gly-378 to Val-398, and Phe-410 to Ile-430. The tract at residues Asp-800–Arg-821 is disordered.

The protein belongs to the monovalent cation:proton antiporter 2 (CPA2) transporter (TC 2.A.37) family. CHX (TC 2.A.37.4) subfamily. Specifically expressed in pollen.

It localises to the membrane. May operate as a cation/H(+) antiporter. This Arabidopsis thaliana (Mouse-ear cress) protein is Cation/H(+) antiporter 15 (CHX15).